Here is a 454-residue protein sequence, read N- to C-terminus: Probable xylan O-acetyltransferase 9 (454 aa).

Topologically, residues 1–15 are cytoplasmic; it reads MKAPPPPSPVAKRAR. The chain crosses the membrane as a helical; Signal-anchor for type II membrane protein span at residues 16–36; that stretch reads VSPFVFLLVLFLLLFSFLYGE. At 37–454 the chain is on the lumenal side; sequence DLKELLGSQA…ELLYTKLFYP (418 aa). 4 disulfides stabilise this stretch: Cys101/Cys152, Cys123/Cys188, Cys132/Cys435, and Cys352/Cys431. The GDS motif motif lies at 175 to 177; it reads GDS. Residue Ser177 is the Nucleophile of the active site. Residues Asn219, Asn293, and Asn394 are each glycosylated (N-linked (GlcNAc...) asparagine). The active-site Proton donor is Asp430. The DXXH motif motif lies at 430–433; the sequence is DCVH. Residue His433 is the Proton acceptor of the active site.

This sequence belongs to the PC-esterase family. TBL subfamily.

It localises to the golgi apparatus membrane. Probable xylan acetyltransferase required for 2-O- and 3-O-monoacetylation of xylosyl residues in xylan. Possesses extremely low activity in vitro. The protein is Probable xylan O-acetyltransferase 9 of Oryza sativa subsp. japonica (Rice).